A 352-amino-acid polypeptide reads, in one-letter code: Strictosidine synthase (352 aa).

Residues Met-1–Ser-31 form the signal peptide. N-linked (GlcNAc...) asparagine glycosylation is found at Asn-95 and Asn-187.

The protein belongs to the strictosidine synthase family. As to quaternary structure, monomer.

It is found in the vacuole. The enzyme catalyses 3alpha(S)-strictosidine + H2O = secologanin + tryptamine. The protein operates within alkaloid biosynthesis; 3alpha(S)-strictosidine biosynthesis; 3alpha(S)-strictosidine from secologanin and tryptamine: step 1/1. Catalyzes the stereospecific condensation of tryptamine with secologanin to form strictosidine, the key intermediate of indole alkaloid biosynthesis. The polypeptide is Strictosidine synthase (STR1) (Catharanthus roseus (Madagascar periwinkle)).